The chain runs to 180 residues: UPF0227 protein YcfP (180 aa).

It belongs to the UPF0227 family.

This Salmonella arizonae (strain ATCC BAA-731 / CDC346-86 / RSK2980) protein is UPF0227 protein YcfP.